The sequence spans 195 residues: Imidazoleglycerol-phosphate dehydratase (195 aa).

Belongs to the imidazoleglycerol-phosphate dehydratase family.

Its subcellular location is the cytoplasm. It carries out the reaction D-erythro-1-(imidazol-4-yl)glycerol 3-phosphate = 3-(imidazol-4-yl)-2-oxopropyl phosphate + H2O. It functions in the pathway amino-acid biosynthesis; L-histidine biosynthesis; L-histidine from 5-phospho-alpha-D-ribose 1-diphosphate: step 6/9. This Jannaschia sp. (strain CCS1) protein is Imidazoleglycerol-phosphate dehydratase.